Here is a 701-residue protein sequence, read N- to C-terminus: C6 finger domain transcription factor nscR (701 aa).

A DNA-binding region (zn(2)-C6 fungal-type) is located at residues Cys-17–Cys-43.

The protein localises to the nucleus. Its function is as follows. Transcription factor that specifically regulates the neosartoricin B biosynthesis gene cluster. This chain is C6 finger domain transcription factor nscR, found in Arthroderma gypseum (strain ATCC MYA-4604 / CBS 118893) (Microsporum gypseum).